The sequence spans 346 residues: NADP-dependent alcohol dehydrogenase C (346 aa).

Positions 41, 63, 94, 97, 100, 108, and 158 each coordinate Zn(2+).

This sequence belongs to the zinc-containing alcohol dehydrogenase family. The cofactor is Zn(2+).

The catalysed reaction is a primary alcohol + NADP(+) = an aldehyde + NADPH + H(+). This Mycobacterium bovis (strain ATCC BAA-935 / AF2122/97) protein is NADP-dependent alcohol dehydrogenase C (adhC).